Reading from the N-terminus, the 59-residue chain is KDGYPVDSKGCKLSCVANNYCDNQCKMKKASGGHCYAMSCYCEGLPENAKVSDSATNIC.

An LCN-type CS-alpha/beta domain is found at 1 to 59 (KDGYPVDSKGCKLSCVANNYCDNQCKMKKASGGHCYAMSCYCEGLPENAKVSDSATNIC). Disulfide bonds link Cys-11-Cys-59, Cys-15-Cys-35, Cys-21-Cys-40, and Cys-25-Cys-42.

It belongs to the long (4 C-C) scorpion toxin superfamily. Sodium channel inhibitor family. In terms of tissue distribution, expressed by the venom gland.

It is found in the secreted. In terms of biological role, binds voltage-independently sodium channels (Nav) and inhibits the inactivation of the activated channels, thereby blocking neuronal transmission. Is highly toxic to insects and barely toxic to mammals. As it does not compete with the classical alpha-toxin AaH2, this toxin is considered as an alpha-like toxin. The protein is Alpha-like toxin CsEv5 of Centruroides sculpturatus (Arizona bark scorpion).